The primary structure comprises 269 residues: Subtilisin BL (269 aa).

Gln2 is a Ca(2+) binding site. One can recognise a Peptidase S8 domain in the interval 5–268; it reads PWGISRVQAP…SGLVNAEAAT (264 aa). Catalysis depends on Asp32, which acts as the Charge relay system. Residue Asp40 participates in Ca(2+) binding. His62 acts as the Charge relay system in catalysis. Leu73, Asn75, Ile77, Val79, Ala163, Tyr165, and Ala168 together coordinate Ca(2+). Ser215 functions as the Charge relay system in the catalytic mechanism.

It belongs to the peptidase S8 family. It depends on Ca(2+) as a cofactor.

It is found in the secreted. It catalyses the reaction Hydrolysis of proteins with broad specificity for peptide bonds, and a preference for a large uncharged residue in P1. Hydrolyzes peptide amides.. Subtilisin is an extracellular alkaline serine protease, it catalyzes the hydrolysis of proteins and peptide amides. The polypeptide is Subtilisin BL (Lederbergia lenta (Bacillus lentus)).